A 274-amino-acid chain; its full sequence is Dermonecrotic toxin LarSicTox-alphaIV1 (274 aa).

Residue His-5 is part of the active site. Mg(2+) contacts are provided by Glu-25 and Asp-27. Catalysis depends on His-41, which acts as the Nucleophile. 2 disulfide bridges follow: Cys-45–Cys-51 and Cys-47–Cys-192. A Mg(2+)-binding site is contributed by Asp-85.

It belongs to the arthropod phospholipase D family. Class II subfamily. Mg(2+) serves as cofactor. As to expression, expressed by the venom gland.

The protein localises to the secreted. The catalysed reaction is an N-(acyl)-sphingosylphosphocholine = an N-(acyl)-sphingosyl-1,3-cyclic phosphate + choline. It carries out the reaction an N-(acyl)-sphingosylphosphoethanolamine = an N-(acyl)-sphingosyl-1,3-cyclic phosphate + ethanolamine. The enzyme catalyses a 1-acyl-sn-glycero-3-phosphocholine = a 1-acyl-sn-glycero-2,3-cyclic phosphate + choline. It catalyses the reaction a 1-acyl-sn-glycero-3-phosphoethanolamine = a 1-acyl-sn-glycero-2,3-cyclic phosphate + ethanolamine. Functionally, dermonecrotic toxins cleave the phosphodiester linkage between the phosphate and headgroup of certain phospholipids (sphingolipid and lysolipid substrates), forming an alcohol (often choline) and a cyclic phosphate. This toxin acts on sphingomyelin (SM). It may also act on ceramide phosphoethanolamine (CPE), lysophosphatidylcholine (LPC) and lysophosphatidylethanolamine (LPE), but not on lysophosphatidylserine (LPS), and lysophosphatidylglycerol (LPG). It acts by transphosphatidylation, releasing exclusively cyclic phosphate products as second products. Induces dermonecrosis, hemolysis, increased vascular permeability, edema, inflammatory response, and platelet aggregation. This Loxosceles arizonica (Arizona brown spider) protein is Dermonecrotic toxin LarSicTox-alphaIV1.